Consider the following 688-residue polypeptide: Complement C1s-1 subcomponent (688 aa).

Positions 1–15 (MWCLVLFSLLASFSA) are cleaved as a signal peptide. Residues 16–130 (EPTMHGEILS…TGFAAYYTAI (115 aa)) form the CUB 1 domain. Ca(2+)-binding residues include E60, D68, D113, D131, I132, and E134. C65 and C83 are oxidised to a cystine. The EGF-like; calcium-binding domain maps to 131–172 (DINECTDFTDVPCSHFCNNFIGGYFCSCPPEYFLHDDMRNCG). Intrachain disulfides connect C135–C147, C143–C156, and C158–C171. Ca(2+) is bound by residues N149, F150, and G153. N149 carries the post-translational modification (3R)-3-hydroxyasparagine. An N-linked (GlcNAc...) asparagine glycan is attached at N174. C175 and C202 are disulfide-bonded. Positions 175–290 (CSGDVFTALI…KGWKLRYHGD (116 aa)) constitute a CUB 2 domain. Residues E226, D236, D275, G278, and Q279 each contribute to the Ca(2+) site. C234 and C251 are disulfide-bonded. Sushi domains are found at residues 292-356 (ISCA…KCQP) and 357-423 (VYCG…RCIP). Disulfide bonds link C294/C341, C321/C354, C359/C403, C386/C421, C425/C549, C595/C618, and C627/C659. The 243-residue stretch at 438 to 680 (IFGGQPAKIE…YVDWILKTMQ (243 aa)) folds into the Peptidase S1 domain. Active-site charge relay system residues include H475 and D529. S631 serves as the catalytic Charge relay system. A glycan (N-linked (GlcNAc...) asparagine) is linked at N641.

It belongs to the peptidase S1 family. Core component of the complement C1 complex, a calcium-dependent complex composed of 1 molecule of the C1Q subcomplex, 2 molecules of C1R and 2 molecules of C1S. The C1Q subcomplex is composed 18 subunits: 3 chains of C1QA, C1QB, and C1QC trimerize to form 6 collagen-like triple helices connected to six globular ligand-recognition modules. Cleaved and activated by C1R to generate Complement C1s subcomponent heavy and light chains. In terms of processing, the iron and 2-oxoglutarate dependent 3-hydroxylation of aspartate and asparagine is (R) stereospecific within EGF domains. As to expression, predominantly expressed in liver.

The protein resides in the secreted. It is found in the cell surface. It carries out the reaction Cleavage of Arg-|-Ala bond in complement component C4 to form C4a and C4b, and Lys(or Arg)-|-Lys bond in complement component C2 to form C2a and C2b: the 'classical' pathway C3 convertase.. With respect to regulation, cleaved and activated by C1R. Immunoglobulin-binding promotes autoactivation of C1R, which results in the cleavage of the Arg-Ile bond in the catalytic domain. Inhibited by C1 inhibitor (SERPING1). Component of the complement C1 complex, a multiprotein complex that initiates the classical pathway of the complement system, a cascade of proteins that leads to phagocytosis and breakdown of pathogens and signaling that strengthens the adaptive immune system. C1S is activated following association of the C1 complex with immunoglobulins (IgG or IgM) complexed with antigens to form antigen-antibody complexes on the surface of pathogens. C1S is cleaved and activated by C1R to generate C1s subcomponent heavy and light chains. C1s subcomponent light chain then cleaves and activates C2 and C4, the next components of the classical complement pathway. In terms of biological role, serine protease component of the complement C1 complex, which catalyzes cleavage and activation of C2 and C4, the next components of the classical complement pathway. Also cleaves IGFBP5 and thereby inhibits the trophic effects of IGF1. The chain is Complement C1s-1 subcomponent from Mus musculus (Mouse).